The primary structure comprises 655 residues: MKRNRFFNTSAAIAISIALNTFFCSMQTIAAEPEETYLDFRKETIYFLFLDRFSDGDPSNNAGFNSATYDPNNLKKYTGGDLRGLINKLPYLKSLGVTSIWITPPIDNVNNTDAAGNTGYHGYWGRDYFRIDEHFGNLDDFKELTSLMHSPDYNMKLVLDYAPNHSNANDENEFGALYRDGVFITDYPTNVAANTGWYHHNGGVTNWNDFFQVKNHNLFNLSDLNQSNTDVYQYLLDGSKFWIDAGVDAIRIDAIKHMDKSFIQKWTSDIYDYSKSIGREGFFFFGEWFGASANTTTGVDGNAIDYANTSGSALLDFGFRDTLERVLVGRSGNTMKTLNSYLIKRQTVFTSDDWQVVFMDNHDMARIGTALRSNATTFGPGNNETGGSQSEAFAQKRIDLGLVATMTVRGIPAIYYGTEHYAANFTSNSFGQVGSDPYNREKMPGFDTESEAFSIIKTLGDLRKSSPAIQNGTYTELWVNDDILVFERRSGNDIVIVALNRGEANTINVKNIAVPNGVYPSLIGNNSVSVANKRTTLTLMQNEAVVIRSQSDDAENPTVQSINFTCNNGYTISGQSVYIIGNIPQLGGWDLTKAVKISPTQYPQWSASLELPSDLNVEWKCVKRNETNPTANVEWQSGANNQFNSNDTQTTNGSF.

Positions 1 to 30 (MKRNRFFNTSAAIAISIALNTFFCSMQTIA) are cleaved as a signal peptide. Ca(2+)-binding residues include D55, N60, N61, G79, and D81. A substrate-binding site is contributed by 123-124 (YW). Ca(2+) is bound at residue N164. Residues H165 and 217–220 (NLFN) each bind substrate. D223 is a binding site for Ca(2+). R251 contributes to the substrate binding site. The active-site Nucleophile is the D253. 256–257 (KH) serves as a coordination point for substrate. H257 lines the Ca(2+) pocket. The active-site Proton donor is the E287. Residues H362, D436, and R440 each coordinate substrate. The CBM20 domain maps to 554-655 (AENPTVQSIN…NDTQTTNGSF (102 aa)). Residues 630 to 655 (TANVEWQSGANNQFNSNDTQTTNGSF) form a disordered region.

Belongs to the glycosyl hydrolase 13 family. In terms of assembly, monomer. It depends on Ca(2+) as a cofactor.

It catalyses the reaction Cyclizes part of a (1-&gt;4)-alpha-D-glucan chain by formation of a (1-&gt;4)-alpha-D-glucosidic bond.. This chain is Cyclomaltodextrin glucanotransferase (cgt), found in Klebsiella oxytoca.